A 175-amino-acid polypeptide reads, in one-letter code: Large ribosomal subunit protein uL10 (175 aa).

The protein belongs to the universal ribosomal protein uL10 family. Part of the ribosomal stalk of the 50S ribosomal subunit. The N-terminus interacts with L11 and the large rRNA to form the base of the stalk. The C-terminus forms an elongated spine to which L12 dimers bind in a sequential fashion forming a multimeric L10(L12)X complex.

Functionally, forms part of the ribosomal stalk, playing a central role in the interaction of the ribosome with GTP-bound translation factors. The protein is Large ribosomal subunit protein uL10 of Mycobacterium sp. (strain JLS).